A 341-amino-acid chain; its full sequence is ATP synthase subunit a 2 (341 aa).

A signal peptide spans 1–33 (MKRVKVIQIKGFFRVMALLAPLLLNAYLPVQAS). 6 consecutive transmembrane segments (helical) span residues 112-132 (VVML…VGAA), 173-193 (LPYL…GLIP), 195-215 (GATA…TFFI), 242-262 (WIIM…ALTV), 273-293 (IVIL…VAAA), and 307-327 (IFVA…FIGL).

This sequence belongs to the ATPase A chain family. As to quaternary structure, F-type ATPases have 2 components, CF(1) - the catalytic core - and CF(0) - the membrane proton channel. CF(1) has five subunits: alpha(3), beta(3), gamma(1), delta(1), epsilon(1). CF(0) has four main subunits: a, b, b' and c.

The protein resides in the cell inner membrane. Functionally, key component of the proton channel; it plays a direct role in the translocation of protons across the membrane. The chain is ATP synthase subunit a 2 from Chlorobium luteolum (strain DSM 273 / BCRC 81028 / 2530) (Pelodictyon luteolum).